Here is an 85-residue protein sequence, read N- to C-terminus: Large ribosomal subunit protein bL27 (85 aa).

The interval 1–24 is disordered; that stretch reads MAHKKAGGSSRNGRDSHSKRLGVK.

The protein belongs to the bacterial ribosomal protein bL27 family.

The polypeptide is Large ribosomal subunit protein bL27 (Nitrosomonas eutropha (strain DSM 101675 / C91 / Nm57)).